A 745-amino-acid polypeptide reads, in one-letter code: DEAD-box ATP-dependent RNA helicase 3A, chloroplastic (745 aa).

Residues 1-41 (MASLVTLPAIAFSNPATASGAVRLRAAAFRCWALRRRGWAV) constitute a chloroplast transit peptide. The short motif at 88-116 (LAIARLGLPDELVATLEKRGITHLFPIQR) is the Q motif element. A Helicase ATP-binding domain is found at 119 to 295 (LIPALGGRDL…RRYLNNPLTI (177 aa)). 132 to 139 (AKTGTGKT) provides a ligand contact to ATP. Positions 243–246 (DEAD) match the DEAD box motif. The region spanning 324 to 469 (ILSDLITVYA…ISPPSIEEVL (146 aa)) is the Helicase C-terminal domain. Residues 606–724 (LTKISKLPAL…SLGGRESSRS (119 aa)) form a disordered region. The segment covering 641–650 (GGGASRGRGG) has biased composition (gly residues). A compositionally biased stretch (basic and acidic residues) spans 656–670 (EDRYRRGGRSLRSDN). Residues 687–724 (RSSSSFGGRSSSYGSRGSPSPSFGVRSSSLGGRESSRS) are compositionally biased toward low complexity. The segment at 727-744 (GACFNCGESGHRASDCPN) adopts a CCHC-type zinc-finger fold.

Belongs to the DEAD box helicase family. DDX21/DDX50 subfamily.

It is found in the plastid. Its subcellular location is the chloroplast. The catalysed reaction is ATP + H2O = ADP + phosphate + H(+). In terms of biological role, nuclear genome-encoded factor involved in ribosome biogenesis in chloroplasts. Binds specific group II introns in chloroplasts and facilitates their splicing. Required for normal development of chloroplasts. The protein is DEAD-box ATP-dependent RNA helicase 3A, chloroplastic of Zea mays (Maize).